Here is a 259-residue protein sequence, read N- to C-terminus: Hydroxyethylthiazole kinase (259 aa).

Met-37 is a substrate binding site. Residues Arg-113 and Thr-158 each coordinate ATP. Gly-185 contacts substrate.

It belongs to the Thz kinase family. Requires Mg(2+) as cofactor.

It catalyses the reaction 5-(2-hydroxyethyl)-4-methylthiazole + ATP = 4-methyl-5-(2-phosphooxyethyl)-thiazole + ADP + H(+). It participates in cofactor biosynthesis; thiamine diphosphate biosynthesis; 4-methyl-5-(2-phosphoethyl)-thiazole from 5-(2-hydroxyethyl)-4-methylthiazole: step 1/1. Functionally, catalyzes the phosphorylation of the hydroxyl group of 4-methyl-5-beta-hydroxyethylthiazole (THZ). The chain is Hydroxyethylthiazole kinase from Helicobacter pylori (strain Shi470).